A 521-amino-acid chain; its full sequence is Bifunctional purine biosynthesis protein PurH (521 aa).

The 150-residue stretch at 1-150 folds into the MGS-like domain; the sequence is MSEDRKAIKR…KNHPSVAVVT (150 aa).

Belongs to the PurH family.

It carries out the reaction (6R)-10-formyltetrahydrofolate + 5-amino-1-(5-phospho-beta-D-ribosyl)imidazole-4-carboxamide = 5-formamido-1-(5-phospho-D-ribosyl)imidazole-4-carboxamide + (6S)-5,6,7,8-tetrahydrofolate. The enzyme catalyses IMP + H2O = 5-formamido-1-(5-phospho-D-ribosyl)imidazole-4-carboxamide. The protein operates within purine metabolism; IMP biosynthesis via de novo pathway; 5-formamido-1-(5-phospho-D-ribosyl)imidazole-4-carboxamide from 5-amino-1-(5-phospho-D-ribosyl)imidazole-4-carboxamide (10-formyl THF route): step 1/1. It participates in purine metabolism; IMP biosynthesis via de novo pathway; IMP from 5-formamido-1-(5-phospho-D-ribosyl)imidazole-4-carboxamide: step 1/1. In Corynebacterium efficiens (strain DSM 44549 / YS-314 / AJ 12310 / JCM 11189 / NBRC 100395), this protein is Bifunctional purine biosynthesis protein PurH.